Reading from the N-terminus, the 455-residue chain is uncharacterized protein (455 aa).

3 N-linked (GlcNAc...) asparagine glycosylation sites follow: N42, N49, and N70. 4 consecutive transmembrane segments (helical) span residues 127 to 147 (AILISFGLIIGALLYLYTWIF), 153 to 173 (SLLDWMFISCSGIIHQFMFRI), 177 to 197 (ICALVLIGFWLLCCLVIITYY), and 377 to 397 (YKFCFIFYGIAIIVFILEIIF). A glycan (N-linked (GlcNAc...) asparagine) is linked at N403.

It is found in the membrane. This is an uncharacterized protein from Caenorhabditis elegans.